A 2351-amino-acid chain; its full sequence is Protein FAM186A (2351 aa).

The stretch at 296–340 forms a coiled coil; it reads EAEKELSLKIIRDLSNENEMLQQKLQDAEEKCEQLIRSKIVIEQL. 8 disordered regions span residues 412–460, 470–489, 505–538, 593–667, 809–838, 868–976, 1805–1837, and 1888–1907; these read ERTP…SWKR, ETSG…SEAK, EMKS…GKSG, QFDD…SEQS, STVQ…SGMS, LQMK…RGLE, GGQS…PGQP, and FQPP…STPG. Over residues 433–446 the composition is skewed to basic and acidic residues; the sequence is DSTKDNVSLKKGDF. The segment covering 472 to 484 has biased composition (polar residues); sequence SGPNLSDNKSGQK. Over residues 506 to 520 the composition is skewed to basic and acidic residues; it reads MKSFSEDKSKSPTEA. Positions 527–538 are enriched in polar residues; it reads LTETKSQGGKSG. Residues 603-612 show a composition bias toward basic residues; the sequence is GKIKGKKHHI. 2 stretches are compositionally biased toward basic and acidic residues: residues 619 to 632 and 812 to 823; these read SKEE…ELTK and QKDHKEKEKQRQ. Residues 812 to 860 adopt a coiled-coil conformation; the sequence is QKDHKEKEKQRQEQYLQEGQEQMSGMSLKQQLLGERNLLKEHYEKISEN. Residues 824 to 838 are compositionally biased toward polar residues; it reads EQYLQEGQEQMSGMS. Basic and acidic residues-rich tracts occupy residues 901-912, 939-955, and 964-976; these read AEQEEKQKQRGQ, LEKE…EAKH, and KGKE…RGLE. Over residues 1816–1835 the composition is skewed to pro residues; sequence PQAPPSPGQLPISRAPPTPG. A compositionally biased stretch (polar residues) spans 1894–1907; that stretch reads AEQSPYLQAPSTPG.

Belongs to the FAM186 family.

The sequence is that of Protein FAM186A (FAM186A) from Homo sapiens (Human).